Here is a 189-residue protein sequence, read N- to C-terminus: Capsid protein (189 aa).

N-acetylmethionine; by host is present on M1.

Belongs to the tymoviruses capsid protein family.

The protein resides in the virion. Functionally, self-assembles to form a T=3 icosahedral capsid composed of 180 copies of the capsid protein. The capsid encapsulates the single-stranded RNA genome. A pentameric unit may be lost during decapsidation. This chain is Capsid protein, found in Brassica (Chinese cabbage).